We begin with the raw amino-acid sequence, 521 residues long: GMP synthase [glutamine-hydrolyzing] (521 aa).

The Glutamine amidotransferase type-1 domain maps to 5–197 (KILILDFGSQ…VLDICGAQPG (193 aa)). C81 acts as the Nucleophile in catalysis. Active-site residues include H171 and E173. Residues 198–390 (WTMPNYIEEA…LGLPREMVYR (193 aa)) form the GMPS ATP-PPase domain. 225-231 (SGGVDSS) is a binding site for ATP.

As to quaternary structure, homodimer.

The enzyme catalyses XMP + L-glutamine + ATP + H2O = GMP + L-glutamate + AMP + diphosphate + 2 H(+). Its pathway is purine metabolism; GMP biosynthesis; GMP from XMP (L-Gln route): step 1/1. Catalyzes the synthesis of GMP from XMP. The chain is GMP synthase [glutamine-hydrolyzing] from Neisseria meningitidis serogroup C (strain 053442).